A 155-amino-acid chain; its full sequence is Plastocyanin, chloroplastic (155 aa).

A chloroplast-targeting transit peptide spans 1-58; it reads MAALSSAAVSVPSFAAATPMRSSRSSRMVVRASLGKKAASAAVAMAAGAMLLGGSAMA. Positions 59 to 155 constitute a Plastocyanin-like domain; it reads QDVLLGANGG…AGMVGKVTVN (97 aa). 4 residues coordinate Cu cation: His-95, Cys-140, His-143, and Met-148.

This sequence belongs to the plastocyanin family. It depends on Cu(2+) as a cofactor.

It is found in the plastid. Its subcellular location is the chloroplast thylakoid membrane. Functionally, participates in electron transfer between P700 and the cytochrome b6-f complex in photosystem I. This Hordeum vulgare (Barley) protein is Plastocyanin, chloroplastic (PETE).